A 400-amino-acid chain; its full sequence is tRNA-specific adenosine deaminase TAD3 (400 aa).

The region spanning 250–385 (SQWHPLRHAS…KSLNHHYAVF (136 aa)) is the CMP/dCMP-type deaminase domain. Residue histidine 257 participates in Zn(2+) binding. Residues 273 to 320 (LFPNPSKIFDQDHVPPSNTDSPAKKQKTSSQSPDVQNDSREETVRDPS) are disordered. The span at 309–320 (NDSREETVRDPS) shows a compositional bias: basic and acidic residues. Zn(2+) is bound by residues cysteine 339 and cysteine 342.

This sequence belongs to the cytidine and deoxycytidylate deaminase family. ADAT3 subfamily. As to quaternary structure, interacts with TAD2.

Its subcellular location is the nucleus. It is found in the cytoplasm. The enzyme catalyses adenosine(34) in tRNA + H2O + H(+) = inosine(34) in tRNA + NH4(+). In terms of biological role, involved in RNA editing. Catalyzes the specific deamination of adenosine-34 in several cytosolic tRNA species. Generates inosine at the wobble position of the anticodon loop. This chain is tRNA-specific adenosine deaminase TAD3, found in Arabidopsis thaliana (Mouse-ear cress).